Consider the following 98-residue polypeptide: NADH-ubiquinone oxidoreductase chain 4L (98 aa).

The next 3 membrane-spanning stretches (helical) occupy residues M1–V21, S29–L49, and I58–L78.

It belongs to the complex I subunit 4L family. In terms of assembly, core subunit of respiratory chain NADH dehydrogenase (Complex I) which is composed of 45 different subunits.

The protein localises to the mitochondrion inner membrane. It catalyses the reaction a ubiquinone + NADH + 5 H(+)(in) = a ubiquinol + NAD(+) + 4 H(+)(out). In terms of biological role, core subunit of the mitochondrial membrane respiratory chain NADH dehydrogenase (Complex I) which catalyzes electron transfer from NADH through the respiratory chain, using ubiquinone as an electron acceptor. Part of the enzyme membrane arm which is embedded in the lipid bilayer and involved in proton translocation. The chain is NADH-ubiquinone oxidoreductase chain 4L (MT-ND4L) from Pan paniscus (Pygmy chimpanzee).